The chain runs to 148 residues: Large ribosomal subunit protein bL28c (148 aa).

Residues 1–71 (MAASGMLISN…PLKPSLQPVA (71 aa)) constitute a chloroplast transit peptide.

In terms of assembly, component of the chloroplast large ribosomal subunit (LSU). Mature 70S chloroplast ribosomes of higher plants consist of a small (30S) and a large (50S) subunit. The 30S small subunit contains 1 molecule of ribosomal RNA (16S rRNA) and 24 different proteins. The 50S large subunit contains 3 rRNA molecules (23S, 5S and 4.5S rRNA) and 33 different proteins.

The protein localises to the plastid. It localises to the chloroplast. In terms of biological role, component of the chloroplast ribosome (chloro-ribosome), a dedicated translation machinery responsible for the synthesis of chloroplast genome-encoded proteins, including proteins of the transcription and translation machinery and components of the photosynthetic apparatus. The protein is Large ribosomal subunit protein bL28c (RPL28) of Spinacia oleracea (Spinach).